The sequence spans 292 residues: Phosphatidylglycerol--prolipoprotein diacylglyceryl transferase (292 aa).

7 helical membrane passes run 21-41 (VSLH…MWLA), 60-80 (LLYA…VLFY), 98-118 (GGMS…VFAH), 124-144 (FFQV…AGRL), 198-218 (SQLY…NLFI), 225-245 (GAVS…VEFF), and 258-278 (ISMG…MMIW). Residue arginine 143 coordinates a 1,2-diacyl-sn-glycero-3-phospho-(1'-sn-glycerol).

It belongs to the Lgt family.

Its subcellular location is the cell inner membrane. The catalysed reaction is L-cysteinyl-[prolipoprotein] + a 1,2-diacyl-sn-glycero-3-phospho-(1'-sn-glycerol) = an S-1,2-diacyl-sn-glyceryl-L-cysteinyl-[prolipoprotein] + sn-glycerol 1-phosphate + H(+). The protein operates within protein modification; lipoprotein biosynthesis (diacylglyceryl transfer). Functionally, catalyzes the transfer of the diacylglyceryl group from phosphatidylglycerol to the sulfhydryl group of the N-terminal cysteine of a prolipoprotein, the first step in the formation of mature lipoproteins. The protein is Phosphatidylglycerol--prolipoprotein diacylglyceryl transferase of Erwinia tasmaniensis (strain DSM 17950 / CFBP 7177 / CIP 109463 / NCPPB 4357 / Et1/99).